A 220-amino-acid polypeptide reads, in one-letter code: CASP-like protein 1E1 (220 aa).

The Cytoplasmic portion of the chain corresponds to 1–57 (METPTPRVKPGFNGVGVGMGSSVNGSSRRAGYYMGPAGAVAVAGGGRAAAAAPVDGC). The helical transmembrane segment at 58–78 (SVALRVFVLAATLVSAVVMGV) threads the bilayer. Residues 79–108 (DRQTSTIRITVTDALPPLEVPLTANWSYSS) are Extracellular-facing. The N-linked (GlcNAc...) asparagine glycan is linked to Asn-103. Residues 109 to 129 (AFVYFVVANAMVCLFSAAALA) traverse the membrane as a helical segment. Residues 130–144 (ACRSRAAMVPVMVGD) lie on the Cytoplasmic side of the membrane. The chain crosses the membrane as a helical span at residues 145–165 (LLALALLYSAVGAAAEFGILG). The Extracellular segment spans residues 166-187 (ERGNSHVRWPKVCNVYGRFCER). The chain crosses the membrane as a helical span at residues 188-208 (AMAAVIVSLIAAFANLVLLML). At 209-220 (NILTIHKSSSYY) the chain is on the cytoplasmic side.

This sequence belongs to the Casparian strip membrane proteins (CASP) family. In terms of assembly, homodimer and heterodimers.

It is found in the cell membrane. This is CASP-like protein 1E1 from Zea mays (Maize).